Reading from the N-terminus, the 464-residue chain is Molybdate transporter 2 (464 aa).

The Tonoplast targeting signal motif lies at 8-9 (LL). Transmembrane regions (helical) follow at residues 33–53 (LSGA…LTLV), 62–82 (LIFT…PMPV), 116–136 (LLLG…LPVV), 172–192 (IWLG…IILS), 223–243 (LLSS…LCFI), 309–329 (VSIS…MPVC), 348–368 (SVIF…NSFV), 374–394 (FPIG…AMAS), and 404–424 (FIML…LGFG).

The protein belongs to the SLC26A/SulP transporter (TC 2.A.53) family. As to expression, expressed in leaves. Not detected in roots, shoots and seeds.

The protein resides in the vacuole membrane. Molybdate transporter required for vacuolar molybdate export during senescence. The sequence is that of Molybdate transporter 2 (MOT2) from Arabidopsis thaliana (Mouse-ear cress).